Reading from the N-terminus, the 167-residue chain is ATP synthase subunit delta, mitochondrial (167 aa).

Residues 1-28 (MFRLSNYMLRKSQFPQGLVRAPFGIRGY) constitute a mitochondrion transit peptide.

This sequence belongs to the ATPase epsilon chain family. F-type ATPases have 2 components, CF(1) - the catalytic core - and CF(0) - the membrane proton channel. CF(1) has five subunits: alpha(3), beta(3), gamma(1), delta(1), epsilon(1). CF(0) has three main subunits: a, b and c.

It is found in the mitochondrion. Its subcellular location is the mitochondrion inner membrane. Functionally, mitochondrial membrane ATP synthase (F(1)F(0) ATP synthase or Complex V) produces ATP from ADP in the presence of a proton gradient across the membrane which is generated by electron transport complexes of the respiratory chain. F-type ATPases consist of two structural domains, F(1) - containing the extramembraneous catalytic core, and F(0) - containing the membrane proton channel, linked together by a central stalk and a peripheral stalk. During catalysis, ATP turnover in the catalytic domain of F(1) is coupled via a rotary mechanism of the central stalk subunits to proton translocation. Part of the complex F(1) domain and of the central stalk which is part of the complex rotary element. Rotation of the central stalk against the surrounding alpha(3)beta(3) subunits leads to hydrolysis of ATP in three separate catalytic sites on the beta subunits. The protein is ATP synthase subunit delta, mitochondrial (atp16) of Schizosaccharomyces pombe (strain 972 / ATCC 24843) (Fission yeast).